The chain runs to 250 residues: Ribonuclease PH (250 aa).

Phosphate-binding positions include R87 and 125 to 127 (GTR).

Belongs to the RNase PH family. In terms of assembly, homohexameric ring arranged as a trimer of dimers.

It catalyses the reaction tRNA(n+1) + phosphate = tRNA(n) + a ribonucleoside 5'-diphosphate. Its function is as follows. Phosphorolytic 3'-5' exoribonuclease that plays an important role in tRNA 3'-end maturation. Removes nucleotide residues following the 3'-CCA terminus of tRNAs; can also add nucleotides to the ends of RNA molecules by using nucleoside diphosphates as substrates, but this may not be physiologically important. Probably plays a role in initiation of 16S rRNA degradation (leading to ribosome degradation) during starvation. In Moorella thermoacetica (strain ATCC 39073 / JCM 9320), this protein is Ribonuclease PH.